The following is a 116-amino-acid chain: Tyrosine-protein phosphatase 14 (116 aa).

The Tyrosine-protein phosphatase domain occupies 1 to 116 (WRMITQEKAQ…SLKNPGPVIV (116 aa)). A substrate-binding site is contributed by aspartate 84.

The protein belongs to the protein-tyrosine phosphatase family.

The catalysed reaction is O-phospho-L-tyrosyl-[protein] + H2O = L-tyrosyl-[protein] + phosphate. The sequence is that of Tyrosine-protein phosphatase 14 (STY-14) from Styela plicata (Wrinkled sea squirt).